The primary structure comprises 509 residues: Seipin-3 (509 aa).

The disordered stretch occupies residues 33–73; that stretch reads YDCLNSSPPANLRRRRLPMDTDSSSSSSTSSLESCEKRSTV. A compositionally biased stretch (low complexity) spans 52 to 63; sequence DTDSSSSSSTSS. A run of 2 helical transmembrane segments spans residues 238–258 and 455–475; these read LFCAVYVGIMLFALLVSAFMI and LFVWISMSLFIMELLFALVFF.

The protein belongs to the seipin family. Expressed in seeds, seedlings, leaves, stems and roots. Not detected in flowers.

It localises to the endoplasmic reticulum membrane. In terms of biological role, involved in lipid metabolism and lipid droplet (LD) morphology, number, and size. Supports the formation of small-sized LDs and modulates triacylglycerol accumulation. Induces probably a reorganization of the endoplasmic reticulum into LD-forming domains. This chain is Seipin-3, found in Arabidopsis thaliana (Mouse-ear cress).